The sequence spans 137 residues: Nucleoside diphosphate kinase (137 aa).

ATP-binding residues include lysine 9, phenylalanine 57, arginine 85, threonine 91, and arginine 102. The active-site Pros-phosphohistidine intermediate is the histidine 119.

Belongs to the NDK family. As to quaternary structure, homotetramer. Requires Mg(2+) as cofactor.

It is found in the cytoplasm. The enzyme catalyses a 2'-deoxyribonucleoside 5'-diphosphate + ATP = a 2'-deoxyribonucleoside 5'-triphosphate + ADP. It carries out the reaction a ribonucleoside 5'-diphosphate + ATP = a ribonucleoside 5'-triphosphate + ADP. Major role in the synthesis of nucleoside triphosphates other than ATP. The ATP gamma phosphate is transferred to the NDP beta phosphate via a ping-pong mechanism, using a phosphorylated active-site intermediate. The protein is Nucleoside diphosphate kinase of Streptococcus thermophilus (strain CNRZ 1066).